Here is a 217-residue protein sequence, read N- to C-terminus: UPF0502 protein KPN78578_10500 (217 aa).

It belongs to the UPF0502 family.

The sequence is that of UPF0502 protein KPN78578_10500 from Klebsiella pneumoniae subsp. pneumoniae (strain ATCC 700721 / MGH 78578).